The following is a 206-amino-acid chain: Ras-related protein RABG3d (206 aa).

15–22 is a GTP binding site; that stretch reads GDSGVGKT. Residues 37–45 carry the Effector region motif; sequence YKATIGADF. Residues 63–67, 125–128, and 158–159 each bind GTP; these read DTAGQ, NKTD, and SA. S-geranylgeranyl cysteine attachment occurs at residues Cys-204 and Cys-206. A Cysteine methyl ester modification is found at Cys-206.

This sequence belongs to the small GTPase superfamily. Rab family.

It localises to the cell membrane. Its function is as follows. Intracellular vesicle trafficking and protein transport. This chain is Ras-related protein RABG3d (RABG3D), found in Arabidopsis thaliana (Mouse-ear cress).